Reading from the N-terminus, the 124-residue chain is MPACRPGPLAGALLLGLLLLGLPRVPGGEVEKTGVCPQLQADLNCTQECVSDAQCADNLKCCQAGCATICHLPNEKEGSCPQVNTDFPQLGLCQDQCQVDSHCPGLLKCCYNGCGKVSCVTPIF.

An N-terminal signal peptide occupies residues 1 to 27 (MPACRPGPLAGALLLGLLLLGLPRVPG). 2 WAP domains span residues 29–73 (EVEK…CHLP) and 74–123 (NEKE…VTPI). 8 cysteine pairs are disulfide-bonded: Cys-36/Cys-62, Cys-45/Cys-66, Cys-49/Cys-61, Cys-55/Cys-70, Cys-80/Cys-110, Cys-93/Cys-114, Cys-97/Cys-109, and Cys-103/Cys-119. N-linked (GlcNAc...) asparagine glycosylation is present at Asn-44.

As to quaternary structure, homotrimer; disulfide-linked. As to expression, epididymis. Highest levels are found in the caput and proximal cauda regions. Lower levels in the distal cauda. Not detected in the efferent ducts.

The protein resides in the secreted. Broad range protease inhibitor. Possible function in sperm maturation. The sequence is that of WAP four-disulfide core domain protein 2 (WFDC2) from Canis lupus familiaris (Dog).